The following is a 738-amino-acid chain: Leucine-rich repeat flightless-interacting protein 1 (738 aa).

Thr-2 carries the N-acetylthreonine modification. Position 16 is a phosphoserine (Ser-16). Basic and acidic residues predominate over residues 40-65 (IRMKELERQQKEVEERPDKDFAEKGS). Residues 40–98 (IRMKELERQQKEVEERPDKDFAEKGSRNMPSLSAATLASLGGTSSRRGSGDTSISMDTE) form a disordered region. Positions 78–94 (SLGGTSSRRGSGDTSIS) are enriched in low complexity. Phosphoserine occurs at positions 83, 84, 88, and 92. Positions 94–194 (SMDTEASIRE…LRQREEMLEK (101 aa)) form a coiled coil. Lys-249 participates in a covalent cross-link: Glycyl lysine isopeptide (Lys-Gly) (interchain with G-Cter in SUMO1). 2 stretches are compositionally biased toward basic and acidic residues: residues 253–262 (VEKVGQRETL) and 277–297 (DCVD…RPVE). The disordered stretch occupies residues 253 to 738 (VEKVGQRETL…SKSKEDCTMS (486 aa)). The residue at position 302 (Ser-302) is a Phosphoserine. Residues 314–326 (EVQSQDQENTSIL) are compositionally biased toward polar residues. Basic and acidic residues predominate over residues 330-347 (EQIESHEVTNKSDSRDSN). Phosphoserine is present on residues Ser-346 and Ser-348. Residues 371 to 380 (KNQSENSMDS) show a composition bias toward polar residues. Basic and acidic residues-rich tracts occupy residues 381-400 (QGKE…RPDH) and 467-476 (SERELAHEAA). Residues 479 to 580 (EEALTQSSQA…KNKKKKAAAP (102 aa)) are DNA-binding. Composition is skewed to polar residues over residues 483 to 495 (TQSS…NTVT) and 520 to 534 (TVQS…PGST). Over residues 535 to 553 (DTKHTSPHAKERNKAKSEQ) the composition is skewed to basic and acidic residues. Residues Ser-551 and Ser-560 each carry the phosphoserine modification. Positions 563–577 (KKTKNKKKKNKKKKA) are enriched in basic residues. Positions 606-626 (RVQATDKKWAAETPELKEDPQ) are enriched in basic and acidic residues. A phosphoserine mark is found at Ser-675 and Ser-701. 2 stretches are compositionally biased toward basic and acidic residues: residues 691–703 (QADE…HSVD) and 720–738 (EQAR…CTMS).

Belongs to the LRRFIP family. Homodimer. May also form higher oligomers. Interacts with FLII. Interacts with MYD88. Competes with FLII for MyD88-binding, even in the absence of LPS.

The protein resides in the nucleus. Its subcellular location is the cytoplasm. Its function is as follows. Transcriptional repressor which preferentially binds to the GC-rich consensus sequence (5'-AGCCCCCGGCG-3') and may regulate expression of TNF, EGFR and PDGFA. May control smooth muscle cells proliferation following artery injury through PDGFA repression. May also bind double-stranded RNA. Positively regulates Toll-like receptor (TLR) signaling in response to agonist probably by competing with the negative FLII regulator for MYD88-binding. The polypeptide is Leucine-rich repeat flightless-interacting protein 1 (Lrrfip1) (Rattus norvegicus (Rat)).